Consider the following 912-residue polypeptide: Translation initiation factor IF-2 (912 aa).

Residues Asn185 to Arg204 form a disordered region. The span at Thr193–Arg204 shows a compositional bias: basic and acidic residues. The tr-type G domain occupies Leu411–Lys581. Positions Gly420 to Thr427 are G1. Gly420–Thr427 serves as a coordination point for GTP. Residues Gly445–His449 form a G2 region. The segment at Asp467–Gly470 is G3. GTP contacts are provided by residues Asp467–His471 and Asn521–Asp524. The G4 stretch occupies residues Asn521–Asp524. The G5 stretch occupies residues Ser557–Lys559.

The protein belongs to the TRAFAC class translation factor GTPase superfamily. Classic translation factor GTPase family. IF-2 subfamily.

Its subcellular location is the cytoplasm. Functionally, one of the essential components for the initiation of protein synthesis. Protects formylmethionyl-tRNA from spontaneous hydrolysis and promotes its binding to the 30S ribosomal subunits. Also involved in the hydrolysis of GTP during the formation of the 70S ribosomal complex. The polypeptide is Translation initiation factor IF-2 (Azobacteroides pseudotrichonymphae genomovar. CFP2).